A 110-amino-acid polypeptide reads, in one-letter code: UPF0060 membrane protein Ping_0587 (110 aa).

4 consecutive transmembrane segments (helical) span residues 6–26 (IFGI…LPYL), 33–53 (SIWL…LLTL), 61–81 (TYAA…WLVE), and 87–107 (MTDL…MFGP).

The protein belongs to the UPF0060 family.

It localises to the cell inner membrane. This is UPF0060 membrane protein Ping_0587 from Psychromonas ingrahamii (strain DSM 17664 / CCUG 51855 / 37).